The following is a 338-amino-acid chain: Flap endonuclease 1 (338 aa).

An N-domain region spans residues 1 to 98 (MGTDIGDLLQ…ETLNRRKEVR (98 aa)). Asp-27, Asp-80, Glu-152, Glu-154, Asp-173, Asp-175, and Asp-236 together coordinate Mg(2+). The segment at 116–257 (AAYKYAQASS…TALKLIKKHG (142 aa)) is I-domain. Residues 330-338 (RQQTLDQWF) are interaction with PCNA.

It belongs to the XPG/RAD2 endonuclease family. FEN1 subfamily. Interacts with PCNA. PCNA stimulates the nuclease activity without altering cleavage specificity. Requires Mg(2+) as cofactor.

In terms of biological role, structure-specific nuclease with 5'-flap endonuclease and 5'-3' exonuclease activities involved in DNA replication and repair. During DNA replication, cleaves the 5'-overhanging flap structure that is generated by displacement synthesis when DNA polymerase encounters the 5'-end of a downstream Okazaki fragment. Binds the unpaired 3'-DNA end and kinks the DNA to facilitate 5' cleavage specificity. Cleaves one nucleotide into the double-stranded DNA from the junction in flap DNA, leaving a nick for ligation. Also involved in the base excision repair (BER) pathway. Acts as a genome stabilization factor that prevents flaps from equilibrating into structures that lead to duplications and deletions. Also possesses 5'-3' exonuclease activity on nicked or gapped double-stranded DNA. This chain is Flap endonuclease 1, found in Methanosarcina barkeri (strain Fusaro / DSM 804).